The sequence spans 394 residues: Olfactomedin-like protein 3B (394 aa).

Positions methionine 1 to serine 18 are cleaved as a signal peptide. Positions leucine 29–aspartate 94 form a coiled coil. The region spanning valine 132 to lysine 383 is the Olfactomedin-like domain. Cysteine 133 and cysteine 310 are oxidised to a cystine. N-linked (GlcNAc...) asparagine glycans are attached at residues asparagine 169, asparagine 204, and asparagine 233.

It belongs to the OLFML3 family.

It localises to the secreted. In terms of biological role, secreted scaffold protein that plays an essential role in dorsoventral patterning during early development. Stabilizes axial formation by restricting chordin (CHRD) activity on the dorsal side. Acts by facilitating the association between the tolloid proteases and their substrate chordin (CHRD), leading to enhance chordin (CHRD) degradation. This is Olfactomedin-like protein 3B (olfml3b) from Danio rerio (Zebrafish).